A 1037-amino-acid polypeptide reads, in one-letter code: Sentrin-specific protease 7 (1037 aa).

A compositionally biased stretch (basic residues) spans 1-10 (MDRARPGRRR). 2 disordered regions span residues 1 to 27 (MDRA…SSPA) and 185 to 399 (SDTA…ENSS). A phosphoserine mark is found at serine 12, serine 13, and serine 25. Over residues 192-208 (SEQLSSSSDGSLESCQS) the composition is skewed to low complexity. The span at 272–282 (GTSNKNTSYSY) shows a compositional bias: polar residues. Residues 290-300 (VSRKRKKRGRS) show a composition bias toward basic residues. Composition is skewed to basic and acidic residues over residues 301 to 321 (NFHD…HTKE) and 328 to 341 (VSRK…DSHQ). Residues 379–399 (ASSPNKSLESSASSEVSENSS) are compositionally biased toward low complexity. Serine 434 and serine 435 each carry phosphoserine. The tract at residues 747–1037 (LGVTNEDLEC…HLQQQKGGSC (291 aa)) is protease. Histidine 847 is a catalytic residue. The disordered stretch occupies residues 873–909 (QFQGQQSQHDHKMTDNDPHTTSTVSTSAEDSQSTEVN). A compositionally biased stretch (basic and acidic residues) spans 880-890 (QHDHKMTDNDP). Residues 891-909 (HTTSTVSTSAEDSQSTEVN) show a composition bias toward polar residues. Residue aspartate 926 is part of the active site. Cysteine 979 serves as the catalytic Nucleophile.

It belongs to the peptidase C48 family.

Its subcellular location is the cytoplasm. Its function is as follows. Protease that acts as a positive regulator of the cGAS-STING pathway by catalyzing desumoylation of CGAS. Desumoylation of CGAS promotes DNA-binding activity of CGAS, subsequent oligomerization and activation. Deconjugates SUMO2 and SUMO3 from targeted proteins, but not SUMO1. Catalyzes the deconjugation of poly-SUMO2 and poly-SUMO3 chains. Has very low efficiency in processing full-length SUMO proteins to their mature forms. The chain is Sentrin-specific protease 7 from Mus musculus (Mouse).